The sequence spans 245 residues: Dehydrogenase/reductase SDR family member 6 (245 aa).

Residues Q16–I18, D37, and D58 contribute to the NAD(+) site. A substrate-binding site is contributed by R144. Y147 serves as the catalytic Proton acceptor. NAD(+) is bound by residues K151 and V180–S184. 2 residues coordinate substrate: R188 and R205.

It belongs to the short-chain dehydrogenases/reductases (SDR) family. Homotetramer. As to expression, detected in liver (at protein level).

The protein localises to the cytoplasm. The catalysed reaction is cis-4-hydroxy-L-proline + NAD(+) = 4-oxo-L-proline + NADH + H(+). It carries out the reaction (R)-3-hydroxybutanoate + NAD(+) = acetoacetate + NADH + H(+). Its pathway is amino-acid metabolism. It participates in siderophore biosynthesis. NAD(H)-dependent dehydrogenase/reductase with a preference for cyclic substrates. Catalyzes stereoselective conversion of 4-oxo-L-proline to cis-4-hydroxy-L-proline, likely a detoxification mechanism for ketoprolines. Mediates the formation of 2,5-dihydroxybenzoate (2,5-DHBA), a siderophore that chelates free cytoplasmic iron and associates with LCN2, thereby regulating iron transport and homeostasis while protecting cells against free radical-induced oxidative stress. The iron-siderophore complex is imported into mitochondria, providing an iron source for mitochondrial metabolic processes in particular heme synthesis. May act as a 3-hydroxybutyrate dehydrogenase. This is Dehydrogenase/reductase SDR family member 6 from Homo sapiens (Human).